Consider the following 1506-residue polypeptide: DDB1- and CUL4-associated factor 1 (1506 aa).

Residues 141 to 499 are protein kinase-like; the sequence is QPLRTYSTGL…STLEILNLED (359 aa). 2 positions are modified to phosphoserine: Ser202 and Ser254. Residues 241–275 are disordered; it reads RLDSSHKTSSRVNSATKPEEGGLKKNKSAKHGDRE. Residues 561–592 enclose the Chromo domain; sequence SYTHEQIVEMMEFLIEYGPAQLYWEPAEVFLK. Lys700 is modified (N6-acetyllysine). Ser827 is modified (phosphoserine). Residues 845 to 877 form the LisH domain; that stretch reads PEKELLLLIRNHLISKGLGETATVLTREADLPM. Residue Thr887 is modified to Phosphothreonine. A phosphoserine mark is found at Ser894 and Ser897. 2 disordered regions span residues 916-946 and 977-999; these read ATVG…GPSY and KSDH…HLPS. Over residues 924-943 the composition is skewed to pro residues; it reads SAPPAHPPPRPPQGSLPLPG. Residues Ser978 and Ser999 each carry the phosphoserine modification. WD repeat units follow at residues 1090–1129, 1132–1173, 1175–1212, 1214–1246, and 1247–1289; these read EDES…EEAS, CHNS…DMKH, FTED…KLLT, FNPD…WDVR, and SAQA…LLHT. The interval 1090–1289 is WD repeat-like region; it reads EDESGFTCCA…DLRTFHLLHT (200 aa). 2 consecutive short sequence motifs (DWD box) follow at residues 1241 to 1248 and 1277 to 1284; these read VLWDVRSA and EIWDLRTF. Ser1327 carries the phosphoserine modification. Positions 1392–1506 are disordered; that stretch reads RLAEDEDEEE…EDDIILSLNE (115 aa). 2 stretches are compositionally biased toward acidic residues: residues 1395–1482 and 1489–1500; these read EDED…EEVE and DSSDNSDLEDDI. Residues 1417–1506 form an interaction with NF2 region; it reads DDDTDDLDEL…EDDIILSLNE (90 aa).

Belongs to the VPRBP/DCAF1 family. As to quaternary structure, component of the DCX (DDB1-CUL4-X-box) E3 ubiquitin-protein ligase complex, named CUL4A-RBX1-DDB1-DCAF1/VPRBP complex. Interacts with DDB1; the interaction is direct. Also forms a ternary complex with DDA1 and DDB1. Interacts with NF2 (via FERM domain). Component of the EDVP complex, a E3 ligase complex containing DYRK2, EDD/UBR5, DDB1 and DCAF1. Interacts with DYRK2; the interaction is direct. Interacts with RAG1; the interaction is direct. Interacts with LLGL1 and LLGL2. Interacts with histone H3. Interacts with ESR1 and LATS1; probably recruited by LATS1 to promote ESR1 ubiquitination and ubiquitin-mediated proteasomal degradation. Directly interacts with TET1, TET2 and TET3 (via C-terminus). Interacts with CEP78; promoting DCAF1 localization to centrosomes. In terms of tissue distribution, widely expressed. Expressed in oocytes and zygotes (at protein level).

The protein localises to the cytoplasm. Its subcellular location is the nucleus. It localises to the cytoskeleton. The protein resides in the microtubule organizing center. It is found in the centrosome. The catalysed reaction is L-seryl-[protein] + ATP = O-phospho-L-seryl-[protein] + ADP + H(+). It carries out the reaction L-threonyl-[protein] + ATP = O-phospho-L-threonyl-[protein] + ADP + H(+). The protein operates within protein modification; protein ubiquitination. Its function is as follows. Acts both as a substrate recognition component of E3 ubiquitin-protein ligase complexes and as an atypical serine/threonine-protein kinase, playing key roles in various processes such as cell cycle, telomerase regulation and histone modification. Probable substrate-specific adapter of a DCX (DDB1-CUL4-X-box) E3 ubiquitin-protein ligase complex, named CUL4A-RBX1-DDB1-DCAF1/VPRBP complex, which mediates ubiquitination and proteasome-dependent degradation of proteins such as NF2. Involved in the turnover of methylated proteins: recognizes and binds methylated proteins via its chromo domain, leading to ubiquitination of target proteins by the RBX1-DDB1-DCAF1/VPRBP complex. The CUL4A-RBX1-DDB1-DCAF1/VPRBP complex is also involved in B-cell development: DCAF1 is recruited by RAG1 to ubiquitinate proteins, leading to limit error-prone repair during V(D)J recombination. Also part of the EDVP complex, an E3 ligase complex that mediates ubiquitination of proteins such as TERT, leading to TERT degradation and telomerase inhibition. The EDVP complex also mediates ubiquitination and degradation of CCP110. Also acts as an atypical serine/threonine-protein kinase that specifically mediates phosphorylation of 'Thr-120' of histone H2A (H2AT120ph) in a nucleosomal context, thereby repressing transcription. H2AT120ph is present in the regulatory region of many tumor suppresor genes, down-regulates their transcription and is present at high level in a number of tumors. Involved in JNK-mediated apoptosis during cell competition process via its interaction with LLGL1 and LLGL2. By acting on TET dioxygenses, essential for oocyte maintenance at the primordial follicle stage, hence essential for female fertility. The protein is DDB1- and CUL4-associated factor 1 of Mus musculus (Mouse).